A 344-amino-acid polypeptide reads, in one-letter code: N-acetyl-gamma-glutamyl-phosphate reductase (344 aa).

The active site involves C149.

Belongs to the NAGSA dehydrogenase family. Type 1 subfamily.

It is found in the cytoplasm. The catalysed reaction is N-acetyl-L-glutamate 5-semialdehyde + phosphate + NADP(+) = N-acetyl-L-glutamyl 5-phosphate + NADPH + H(+). It participates in amino-acid biosynthesis; L-arginine biosynthesis; N(2)-acetyl-L-ornithine from L-glutamate: step 3/4. Its function is as follows. Catalyzes the NADPH-dependent reduction of N-acetyl-5-glutamyl phosphate to yield N-acetyl-L-glutamate 5-semialdehyde. This Acidithiobacillus ferrooxidans (strain ATCC 23270 / DSM 14882 / CIP 104768 / NCIMB 8455) (Ferrobacillus ferrooxidans (strain ATCC 23270)) protein is N-acetyl-gamma-glutamyl-phosphate reductase.